The primary structure comprises 383 residues: BRISC and BRCA1-A complex member 2 (383 aa).

Met1 carries the N-acetylmethionine modification. At Ser2 the chain carries Phosphoserine. UEV-like stretches follow at residues 30–147 (DATN…TLLE) and 275–364 (IAAF…RAKA).

The protein belongs to the BABAM2 family. As to quaternary structure, component of the ARISC complex, at least composed of UIMC1/RAP80, ABRAXAS1, BRCC3/BRCC36, BABAM2 and BABAM1/NBA1. Component of the BRCA1-A complex, at least composed of BRCA1, BARD1, UIMC1/RAP80, ABRAXAS1, BRCC3/BRCC36, BABAM2 and BABAM1/NBA1. In the BRCA1-A complex, interacts directly with ABRAXAS1, BRCC3/BRCC36 and BABAM1/NBA1. Binds polyubiquitin. Component of the BRISC complex, at least composed of ABRAXAS2, BRCC3/BRCC36, BABAM2 and BABAM1/NBA1. Identified in a complex with SHMT2 and the other subunits of the BRISC complex. Component of the BRCA1/BRCA2 containing complex (BRCC), which also contains BRCA1, BRCA2, BARD1, BRCC3/BRCC36 and RAD51. BRCC is a ubiquitin E3 ligase complex that enhances cellular survival following DNA damage. May interact with FAS and TNFRSF1A.

It localises to the cytoplasm. The protein resides in the nucleus. In terms of biological role, component of the BRCA1-A complex, a complex that specifically recognizes 'Lys-63'-linked ubiquitinated histones H2A and H2AX at DNA lesions sites, leading to target the BRCA1-BARD1 heterodimer to sites of DNA damage at double-strand breaks (DSBs). The BRCA1-A complex also possesses deubiquitinase activity that specifically removes 'Lys-63'-linked ubiquitin on histones H2A and H2AX. In the BRCA1-A complex, it acts as an adapter that bridges the interaction between BABAM1/NBA1 and the rest of the complex, thereby being required for the complex integrity and modulating the E3 ubiquitin ligase activity of the BRCA1-BARD1 heterodimer. Component of the BRISC complex, a multiprotein complex that specifically cleaves 'Lys-63'-linked ubiquitin in various substrates. Within the BRISC complex, acts as an adapter that bridges the interaction between BABAM1/NBA1 and the rest of the complex, thereby being required for the complex integrity. The BRISC complex is required for normal mitotic spindle assembly and microtubule attachment to kinetochores via its role in deubiquitinating NUMA1. The BRISC complex plays a role in interferon signaling via its role in the deubiquitination of the interferon receptor IFNAR1; deubiquitination increases IFNAR1 activity by enhancing its stability and cell surface expression. Down-regulates the response to bacterial lipopolysaccharide (LPS) via its role in IFNAR1 deubiquitination. May play a role in homeostasis or cellular differentiation in cells of neural, epithelial and germline origins. May also act as a death receptor-associated anti-apoptotic protein, which inhibits the mitochondrial apoptotic pathway. May regulate TNF-alpha signaling through its interactions with TNFRSF1A; however these effects may be indirect. This chain is BRISC and BRCA1-A complex member 2, found in Rattus norvegicus (Rat).